Consider the following 71-residue polypeptide: DNA-directed RNA polymerases I, II, and III subunit RPABC5 (71 aa).

C7, C10, C44, and C45 together coordinate Zn(2+).

This sequence belongs to the archaeal Rpo10/eukaryotic RPB10 RNA polymerase subunit family. In terms of assembly, component of the RNA polymerase I (Pol I), RNA polymerase II (Pol II) and RNA polymerase III (Pol III) complexes consisting of at least 13, 12 and 17 subunits, respectively.

The protein resides in the nucleus. Functionally, DNA-dependent RNA polymerase catalyzes the transcription of DNA into RNA using the four ribonucleoside triphosphates as substrates. Common component of RNA polymerases I, II and III which synthesize ribosomal RNA precursors, mRNA precursors and many functional non-coding RNAs, and a small RNAs, such as 5S rRNA and tRNAs, respectively. Pol II is the central component of the basal RNA polymerase II transcription machinery. Pols are composed of mobile elements that move relative to each other. In Pol II, RBP10 is part of the core element with the central large cleft. In Brassica napus (Rape), this protein is DNA-directed RNA polymerases I, II, and III subunit RPABC5.